Consider the following 707-residue polypeptide: MLFTGTVRVRVLEARQLRPTEWSRRFRQDEAATAAIDSYVNVDWDEYHIGKTQVRPKTNEPRWNEEFTASGVHQGKAIGFSVFHSCVMPPDDFVANTRIAFDQLKIGSANDIWVDLEPHGQLHVVVEMHGTNVEDVHSHNKTRVFKERTNAFNDRQRRGAMRRKIHEVTGHKFMALFLRQPTFCAHCKEFIWGIGKQGYQCQICTVVVHKRCHEDVVWKCPGNKADAVEELGKEIQETGAGRFNINMPHRFSVHSYKRPTFCDHCGSMLYGLINQGLQCSTCKLNVHKRCQRNVANNCGINAKQMAAELAQLGLTGDKMSIRSKKKPSIMTDTSTDISGSSNSENSGYLQQISEDDSGTTSSRSASKVPGGTLSIHDFTFMKVLGKGSFGKVMLAERKGTDEVYAIKILKKDVIVQDDDVECTMCEKRILSLAAKHPFLTALHSSFQTSDRLFFVMEYVNGGDLMFQIQRARKFDESRARFYAAEVTCALQFLHRNDVIYRDLKLDNILLDAEGHCRLADFGMCKEGINKDNLTSTFCGTPDYIAPEILQEMEYGVSVDWWALGVLMYEMMAGQPPFEADNEDDLFEAILNDDVLYPVWLSKEAVNILKAFMTKNAGKRLGCVVSQGGEDAIRAHPFFREIDWDALESRQVKPPFKPKIKSKRDANNFDSDFTKEEPVLTPSDPAVVRAINQDEFRGFSFINPHFTY.

Positions 1 to 114 (MLFTGTVRVR…KIGSANDIWV (114 aa)) constitute a C2 domain. Phorbol-ester/DAG-type zinc fingers lie at residues 170-220 (GHKF…VWKC) and 248-298 (PHRF…ANNC). A disordered region spans residues 323–368 (SKKKPSIMTDTSTDISGSSNSENSGYLQQISEDDSGTTSSRSASKV). Over residues 330–365 (MTDTSTDISGSSNSENSGYLQQISEDDSGTTSSRSA) the composition is skewed to polar residues. One can recognise a Protein kinase domain in the interval 378-638 (FTFMKVLGKG…EDAIRAHPFF (261 aa)). ATP is bound by residues 384–392 (LGKGSFGKV) and K407. Catalysis depends on D502, which acts as the Proton acceptor. The 69-residue stretch at 639–707 (REIDWDALES…FSFINPHFTY (69 aa)) folds into the AGC-kinase C-terminal domain.

This sequence belongs to the protein kinase superfamily. AGC Ser/Thr protein kinase family. PKC subfamily. In terms of tissue distribution, expressed selectively in neurons that receive, transmit and process environmental signals.

The protein localises to the membrane. It localises to the cytoplasm. The protein resides in the cytoskeleton. It carries out the reaction L-seryl-[protein] + ATP = O-phospho-L-seryl-[protein] + ADP + H(+). The catalysed reaction is L-threonyl-[protein] + ATP = O-phospho-L-threonyl-[protein] + ADP + H(+). Functionally, PKC is activated by diacylglycerol which in turn phosphorylates a range of cellular proteins. PKC also serves as the receptor for phorbol esters, a class of tumor promoters. Involved in neuropeptide secretion in motor axons. Likely to act via the extracellular signal-regulated kinase/mitogen-activated protein kinase (ERK/MAPK) pathway in the signaling response to various sensory neurons; temperature, odor, taste, and osmolality. Its role in regulation differs depending on the neuron in which it is acting; thermosensation in AFD neurons, osmolality in ASH neurons, olfactory perception in AWA and AWC neurons. Promotes dauer formation mediated by the insulin/IGF pathway. Required for resistance to antimitotic toxins. The sequence is that of Protein kinase C-like 1B from Caenorhabditis elegans.